The following is a 100-amino-acid chain: UPF0251 protein swp_0615 (100 aa).

The protein belongs to the UPF0251 family.

This is UPF0251 protein swp_0615 from Shewanella piezotolerans (strain WP3 / JCM 13877).